Consider the following 591-residue polypeptide: Probable translation initiation factor IF-2 (591 aa).

In terms of domain architecture, tr-type G spans 7 to 223; it reads LRTPIVCVMG…LLGLAQKFLE (217 aa). The tract at residues 16 to 23 is G1; the sequence is GHVDHGKT. 16–23 serves as a coordination point for GTP; sequence GHVDHGKT. Positions 41 to 45 are G2; it reads AITQH. Residues 78 to 81 form a G3 region; that stretch reads DTPG. GTP-binding positions include 78–82 and 132–135; these read DTPGH and NKID. Positions 132–135 are G4; the sequence is NKID. The tract at residues 200 to 202 is G5; that stretch reads SAM.

This sequence belongs to the TRAFAC class translation factor GTPase superfamily. Classic translation factor GTPase family. IF-2 subfamily.

In terms of biological role, function in general translation initiation by promoting the binding of the formylmethionine-tRNA to ribosomes. Seems to function along with eIF-2. The sequence is that of Probable translation initiation factor IF-2 from Methanosarcina barkeri (strain Fusaro / DSM 804).